Consider the following 461-residue polypeptide: Cysteine--tRNA ligase (461 aa).

Residue Cys-30 coordinates Zn(2+). The short motif at 32–42 (VTVYDLCHIGH) is the 'HIGH' region element. 3 residues coordinate Zn(2+): Cys-211, His-236, and Glu-240. A 'KMSKS' region motif is present at residues 268 to 272 (KMSKS). Residue Lys-271 coordinates ATP.

It belongs to the class-I aminoacyl-tRNA synthetase family. In terms of assembly, monomer. The cofactor is Zn(2+).

It localises to the cytoplasm. The catalysed reaction is tRNA(Cys) + L-cysteine + ATP = L-cysteinyl-tRNA(Cys) + AMP + diphosphate. This Shewanella sp. (strain MR-7) protein is Cysteine--tRNA ligase.